A 133-amino-acid chain; its full sequence is Secretin (133 aa).

Residues methionine 1 to alanine 22 form the signal peptide. Positions leucine 23–proline 30 are excised as a propeptide. A Valine amide modification is found at valine 58. Serine 62 is subject to Phosphoserine. The propeptide occupies serine 62–arginine 133.

The protein belongs to the glucagon family. In terms of tissue distribution, highly expressed in the intestine. Also expressed in the hippocampus, cerebellum and the brain stem in adult mouse brain. In the hippocampus, expressed in the dentate gyrus, the hilus and the molecular layer.

It is found in the secreted. Its function is as follows. Hormone involved in different processes, such as regulation of the pH of the duodenal content, food intake and water homeostasis. Exerts its biological effects by binding to secretin receptor (SCTR), a G-protein coupled receptor expressed in the basolateral domain of several cells. Acts as a key gastrointestinal hormone by regulating the pH of the duodenal content. Secreted by S cells of the duodenum in the crypts of Lieberkuehn and regulates the pH of the duodenum by (1) inhibiting the secretion of gastric acid from the parietal cells of the stomach and (2) stimulating the production of bicarbonate (NaHCO(3)) from the ductal cells of the pancreas. Production of bicarbonate is essential to neutralize the pH and ensure no damage is done to the small intestine by the gastric acid. In addition to regulating the pH of the duodenal content, plays a central role in diet induced thermogenesis: acts as a non-sympathetic brown fat (BAT) activator mediating prandial thermogenesis, which consequentially induces satiation. Mechanistically, secretin released by the gut after a meal binds to secretin receptor (SCTR) in brown adipocytes, activating brown fat thermogenesis by stimulating lipolysis, which is sensed in the brain and promotes satiation. Also able to stimulate lipolysis in white adipocytes. Also plays an important role in cellular osmoregulation: released into the systemic circulation in response to hyperosmolality and acts at different levels in the hypothalamus, pituitary and kidney to regulate water homeostasis. Also plays a role in the central nervous system, possibly by acting as a neuropeptide hormone: required for hippocampal synaptic function and neural progenitor cells maintenance. This Mus musculus (Mouse) protein is Secretin.